The sequence spans 371 residues: uncharacterized protein (371 aa).

This is an uncharacterized protein from Rickettsia prowazekii (strain Madrid E).